The primary structure comprises 70 residues: U-scoloptoxin(04)-Er3a (70 aa).

A signal peptide spans 1 to 24 (MAAIRNLLILTMLLIVCVSWNADA).

This sequence belongs to the scoloptoxin-04 family. Contains 2 disulfide bonds. Expressed by the venom gland.

The protein localises to the secreted. This chain is U-scoloptoxin(04)-Er3a, found in Ethmostigmus rubripes (Giant centipede).